The following is a 2890-amino-acid chain: Bifunctional DNA-directed RNA polymerase subunit beta-beta' (2890 aa).

Residues 1–1377 (MSKKIPLKNR…DINIFGDDVD (1377 aa)) form a DNA-directed RNA polymerase subunit beta region. A DNA-directed RNA polymerase subunit beta' region spans residues 1384–2890 (PIMIKEDDRP…LRALEDNSKF (1507 aa)). Zn(2+) is bound by residues cysteine 1449, cysteine 1451, cysteine 1465, and cysteine 1468. Positions 1849, 1851, and 1853 each coordinate Mg(2+). Zn(2+)-binding residues include cysteine 2179, cysteine 2253, cysteine 2260, and cysteine 2263.

This sequence in the N-terminal section; belongs to the RNA polymerase beta chain family. The protein in the C-terminal section; belongs to the RNA polymerase beta' chain family. As to quaternary structure, the RNAP catalytic core consists of 2 alpha, 1 beta/beta' and 1 omega subunit. When a sigma factor is associated with the core the holoenzyme is formed, which can initiate transcription. It depends on Mg(2+) as a cofactor. Requires Zn(2+) as cofactor.

It catalyses the reaction RNA(n) + a ribonucleoside 5'-triphosphate = RNA(n+1) + diphosphate. Its function is as follows. DNA-dependent RNA polymerase catalyzes the transcription of DNA into RNA using the four ribonucleoside triphosphates as substrates. The polypeptide is Bifunctional DNA-directed RNA polymerase subunit beta-beta' (rpoBC) (Helicobacter pylori (strain J99 / ATCC 700824) (Campylobacter pylori J99)).